Consider the following 361-residue polypeptide: Holliday junction branch migration complex subunit RuvB (361 aa).

The interval 1–181 (MKDQRLLDSV…FGIPIRLNFY (181 aa)) is large ATPase domain (RuvB-L). ATP-binding positions include Leu-20, Arg-21, Gly-62, Lys-65, Thr-66, Thr-67, 128-130 (EDY), Arg-171, Tyr-181, and Arg-218. Thr-66 lines the Mg(2+) pocket. A small ATPAse domain (RuvB-S) region spans residues 182 to 252 (TIEELEYIVQ…VADEALSRLE (71 aa)). Residues 255 to 361 (HLGLDPLDRR…QTTLWDEADE (107 aa)) form a head domain (RuvB-H) region. 3 residues coordinate DNA: Arg-291, Arg-310, and Arg-315.

Belongs to the RuvB family. In terms of assembly, homohexamer. Forms an RuvA(8)-RuvB(12)-Holliday junction (HJ) complex. HJ DNA is sandwiched between 2 RuvA tetramers; dsDNA enters through RuvA and exits via RuvB. An RuvB hexamer assembles on each DNA strand where it exits the tetramer. Each RuvB hexamer is contacted by two RuvA subunits (via domain III) on 2 adjacent RuvB subunits; this complex drives branch migration. In the full resolvosome a probable DNA-RuvA(4)-RuvB(12)-RuvC(2) complex forms which resolves the HJ.

It localises to the cytoplasm. The enzyme catalyses ATP + H2O = ADP + phosphate + H(+). The RuvA-RuvB-RuvC complex processes Holliday junction (HJ) DNA during genetic recombination and DNA repair, while the RuvA-RuvB complex plays an important role in the rescue of blocked DNA replication forks via replication fork reversal (RFR). RuvA specifically binds to HJ cruciform DNA, conferring on it an open structure. The RuvB hexamer acts as an ATP-dependent pump, pulling dsDNA into and through the RuvAB complex. RuvB forms 2 homohexamers on either side of HJ DNA bound by 1 or 2 RuvA tetramers; 4 subunits per hexamer contact DNA at a time. Coordinated motions by a converter formed by DNA-disengaged RuvB subunits stimulates ATP hydrolysis and nucleotide exchange. Immobilization of the converter enables RuvB to convert the ATP-contained energy into a lever motion, pulling 2 nucleotides of DNA out of the RuvA tetramer per ATP hydrolyzed, thus driving DNA branch migration. The RuvB motors rotate together with the DNA substrate, which together with the progressing nucleotide cycle form the mechanistic basis for DNA recombination by continuous HJ branch migration. Branch migration allows RuvC to scan DNA until it finds its consensus sequence, where it cleaves and resolves cruciform DNA. This chain is Holliday junction branch migration complex subunit RuvB, found in Bartonella quintana (strain Toulouse) (Rochalimaea quintana).